The sequence spans 173 residues: uncharacterized protein (173 aa).

The N-acetyltransferase domain maps to 4–173 (VKIVQVSEKD…TDFLLKKALV (170 aa)). Acetyl-CoA-binding positions include 97–99 (IYL), 106–110 (RGLGK), and 136–138 (NEN).

This is an uncharacterized protein from Lactobacillus delbrueckii subsp. lactis.